A 170-amino-acid polypeptide reads, in one-letter code: Adenine phosphoribosyltransferase (170 aa).

The protein belongs to the purine/pyrimidine phosphoribosyltransferase family. As to quaternary structure, homodimer.

It is found in the cytoplasm. It catalyses the reaction AMP + diphosphate = 5-phospho-alpha-D-ribose 1-diphosphate + adenine. It participates in purine metabolism; AMP biosynthesis via salvage pathway; AMP from adenine: step 1/1. Catalyzes a salvage reaction resulting in the formation of AMP, that is energically less costly than de novo synthesis. In Mycoplasmopsis pulmonis (strain UAB CTIP) (Mycoplasma pulmonis), this protein is Adenine phosphoribosyltransferase.